Consider the following 409-residue polypeptide: Histidinol dehydrogenase homolog (409 aa).

The protein belongs to the histidinol dehydrogenase family.

The protein is Histidinol dehydrogenase homolog of Synechocystis sp. (strain ATCC 27184 / PCC 6803 / Kazusa).